The chain runs to 846 residues: Enhancer of polycomb-like protein 1 (846 aa).

Disordered stretches follow at residues 169–204, 391–466, 587–609, 682–702, and 759–804; these read FNSK…KGDA, TSDE…APDA, EKKR…PKAM, AADA…PQPN, and QVQA…GVKQ. Residues 180–203 show a composition bias toward basic and acidic residues; sequence VKSDKEQGRGMRVKGKDREKEKGD. Residues 411-426 are compositionally biased toward polar residues; it reads PSLSGQTPLTSGQSSS. Positions 432-452 are enriched in basic and acidic residues; the sequence is TDKDREERAQRERYDAQRNAE. The stretch at 434 to 490 forms a coiled coil; that stretch reads KDREERAQRERYDAQRNAERSGILSGRSNAPDALKERLQALQQKTEEMLARKKEQDA. Residues 686–702 are compositionally biased toward pro residues; the sequence is KPPPAPIFQKPPAPQPN. Residues 759–773 show a composition bias toward low complexity; sequence QVQAQGQGHPQAHLQ. Over residues 774 to 796 the composition is skewed to polar residues; the sequence is THPQGVSQPNGVNSPMPNGQQML.

This sequence belongs to the enhancer of polycomb family. Component of the NuA4 histone acetyltransferase complex.

Its subcellular location is the nucleus. Component of the NuA4 histone acetyltransferase complex which is involved in transcriptional activation of selected genes principally by acetylation of nucleosomal histone H4 and H2A. The NuA4 complex is also involved in DNA repair. Involved in gene silencing by neighboring heterochromatin, blockage of the silencing spreading along the chromosome, and required for cell cycle progression through G2/M. The polypeptide is Enhancer of polycomb-like protein 1 (EPL1) (Cryptococcus neoformans var. neoformans serotype D (strain B-3501A) (Filobasidiella neoformans)).